A 435-amino-acid polypeptide reads, in one-letter code: AP-2 complex subunit mu (435 aa).

Ser45 is modified (phosphoserine). Phosphothreonine is present on Thr156. Residues 170–434 form the MHD domain; that stretch reads RNELFLDVLE…IGRSGIYETR (265 aa). Lys341, Lys345, and Lys354 together coordinate a 1,2-diacyl-sn-glycero-3-phospho-(1D-myo-inositol-3,4,5-trisphosphate).

It belongs to the adaptor complexes medium subunit family. In terms of assembly, adaptor protein complex 2 (AP-2) is a heterotetramer composed of two large adaptins (alpha-type subunit AP2A1 or AP2A2 and beta-type subunit AP2B1), a medium adaptin (mu-type subunit AP2M1) and a small adaptin (sigma-type subunit AP2S1). Interacts with ATP6V1H and MEGF10. Interacts with EGFR and TTGN1. Interacts with F2R. Interacts with PIP5K1C; tyrosine phosphorylation of PIP5K1C weakens the interaction. Interacts with KIAA0319; required for clathrin-mediated endocytosis of KIAA0319. Interacts with DVL2 (via DEP domain). Interacts with KCNQ1; mediates estrogen-induced internalization via clathrin-coated vesicles. Interacts with P2RX4 (via internalization motif). Together with AP2A1 or AP2A2 and AP2B1, it interacts with ADAM10; this interaction facilitates ADAM10 endocytosis from the plasma membrane during long-term potentiation in hippocampal neurons. Probably interacts with ACE2 (via endocytic sorting signal motif); the interaction is inhibited by ACE2 phosphorylation. Interacts with RALBP1; the interaction is direct. Interacts with TMEM106B (via N-terminus). In terms of processing, phosphorylation at Thr-156 increases the affinity of the AP-2 complex for cargo membrane proteins during the initial stages of endocytosis.

The protein localises to the cell membrane. The protein resides in the membrane. It is found in the coated pit. Functionally, component of the adaptor protein complex 2 (AP-2). Adaptor protein complexes function in protein transport via transport vesicles in different membrane traffic pathways. Adaptor protein complexes are vesicle coat components and appear to be involved in cargo selection and vesicle formation. AP-2 is involved in clathrin-dependent endocytosis in which cargo proteins are incorporated into vesicles surrounded by clathrin (clathrin-coated vesicles, CCVs) which are destined for fusion with the early endosome. The clathrin lattice serves as a mechanical scaffold but is itself unable to bind directly to membrane components. Clathrin-associated adaptor protein (AP) complexes which can bind directly to both the clathrin lattice and to the lipid and protein components of membranes are considered to be the major clathrin adaptors contributing the CCV formation. AP-2 also serves as a cargo receptor to selectively sort the membrane proteins involved in receptor-mediated endocytosis. AP-2 seems to play a role in the recycling of synaptic vesicle membranes from the presynaptic surface. AP-2 recognizes Y-X-X-[FILMV] (Y-X-X-Phi) and [ED]-X-X-X-L-[LI] endocytosis signal motifs within the cytosolic tails of transmembrane cargo molecules. AP-2 may also play a role in maintaining normal post-endocytic trafficking through the ARF6-regulated, non-clathrin pathway. During long-term potentiation in hippocampal neurons, AP-2 is responsible for the endocytosis of ADAM10. The AP-2 mu subunit binds to transmembrane cargo proteins; it recognizes the Y-X-X-Phi motifs. The surface region interacting with to the Y-X-X-Phi motif is inaccessible in cytosolic AP-2, but becomes accessible through a conformational change following phosphorylation of AP-2 mu subunit at Thr-156 in membrane-associated AP-2. The membrane-specific phosphorylation event appears to involve assembled clathrin which activates the AP-2 mu kinase AAK1. Plays a role in endocytosis of frizzled family members upon Wnt signaling. The polypeptide is AP-2 complex subunit mu (AP2M1) (Bos taurus (Bovine)).